A 505-amino-acid polypeptide reads, in one-letter code: Alpha-1-syntrophin (505 aa).

Disordered regions lie at residues 1–25 (MASG…GAGG) and 40–77 (LTVS…PPQL). 2 consecutive PH domains span residues 6 to 269 (RAPR…AQVN) and 293 to 401 (DIKQ…DGCH). In terms of domain architecture, PDZ spans 87 to 170 (RVTVRKADAG…EVVLEVKYMK (84 aa)). Phosphoserine is present on residues serine 101, serine 184, serine 189, serine 193, and serine 200. The interval 180-210 (TGGTSVGWDSPPASPLQRQPSSPGPTPRNFS) is disordered. The SU domain maps to 449-505 (PFEKLQMSSDDGASLLFLDFGGAEGEIQLDLHSCPKTIVFIIHSFLSAKVTRLGLLA). The tract at residues 483-505 (PKTIVFIIHSFLSAKVTRLGLLA) is calmodulin-binding.

It belongs to the syntrophin family. In terms of assembly, monomer and homodimer. Interacts with the other members of the syntrophin family SNTB1 and SNTB2; SGCG and SGCA of the dystrophin glycoprotein complex; NOS1; GRB2; the sodium channel proteins SCN4A and SCN5A; F-actin and calmodulin. Interacts with dystrophin protein DMD and related proteins DTNA and UTRN and with MAPK12, TGFA and GA. Interacts with MYOC; regulates muscle hypertrophy. Interacts with DTNB. Post-translationally, phosphorylated by CaM-kinase II. Phosphorylation may inhibit the interaction with DMD. In terms of tissue distribution, high expression in skeletal muscle and heart. Low expression in brain, pancreas, liver, kidney and lung. Not detected in placenta.

It is found in the cell membrane. Its subcellular location is the sarcolemma. It localises to the cell junction. The protein resides in the cytoplasm. The protein localises to the cytoskeleton. Adapter protein that binds to and probably organizes the subcellular localization of a variety of membrane proteins. May link various receptors to the actin cytoskeleton and the extracellular matrix via the dystrophin glycoprotein complex. Plays an important role in synapse formation and in the organization of UTRN and acetylcholine receptors at the neuromuscular synapse. Binds to phosphatidylinositol 4,5-bisphosphate. This Homo sapiens (Human) protein is Alpha-1-syntrophin (SNTA1).